The primary structure comprises 1121 residues: RecBCD enzyme subunit RecC (1121 aa).

Belongs to the RecC family. As to quaternary structure, heterotrimer of RecB, RecC and RecD. All subunits contribute to DNA-binding.

A helicase/nuclease that prepares dsDNA breaks (DSB) for recombinational DNA repair. Binds to DSBs and unwinds DNA via a highly rapid and processive ATP-dependent bidirectional helicase activity. Unwinds dsDNA until it encounters a Chi (crossover hotspot instigator) sequence from the 3' direction. Cuts ssDNA a few nucleotides 3' to the Chi site. The properties and activities of the enzyme are changed at Chi. The Chi-altered holoenzyme produces a long 3'-ssDNA overhang and facilitates RecA-binding to the ssDNA for homologous DNA recombination and repair. Holoenzyme degrades any linearized DNA that is unable to undergo homologous recombination. In the holoenzyme this subunit recognizes the wild-type Chi sequence, and when added to isolated RecB increases its ATP-dependent helicase processivity. This chain is RecBCD enzyme subunit RecC, found in Haemophilus influenzae (strain ATCC 51907 / DSM 11121 / KW20 / Rd).